The chain runs to 786 residues: E3 ubiquitin-protein ligase UHRF1 (786 aa).

The Ubiquitin-like domain occupies 1–78 (MWIQVRTMDG…IQLLVRQSLV (78 aa)). Residues serine 76, serine 98, and serine 102 each carry the phosphoserine modification. The disordered stretch occupies residues 82–134 (PVPSSSGGSKERDSELSDTDSGCGLAQSESDKSSNSGEAANEPEGKADEDECD). Tudor-like regions lie at residues 139-213 (GLYK…ARAR) and 220-287 (DLQV…IERP). Lysine 283 is covalently cross-linked (Glycyl lysine isopeptide (Lys-Gly) (interchain with G-Cter in SUMO2)). A linker region spans residues 300 to 305 (RKSGPS). Phosphoserine; by PKA is present on serine 302. The PHD-type zinc finger occupies 303–370 (GPSCKHCKDD…EWYCPDCRID (68 aa)). Histone H3R2me0 binding regions lie at residues 337 to 341 (CDECD) and 357 to 359 (PPE). Phosphoserine is present on serine 372. Lysine 389 participates in a covalent cross-link: Glycyl lysine isopeptide (Lys-Gly) (interchain with G-Cter in SUMO2). Lysine 403 is subject to N6-acetyllysine. The YDG domain maps to 423–586 (GPIPGIPVGT…FLVWRFLLRR (164 aa)). The tract at residues 449–450 (HV) is required to promote base flipping. Residues 467–468 (AG) and aspartate 473 contribute to the DNA site. Required for formation of a 5-methylcytosine-binding pocket regions lie at residues 470–473 (YEDD) and 482–485 (YTGS). At lysine 550 the chain carries N6-acetyllysine; alternate. Residue lysine 550 forms a Glycyl lysine isopeptide (Lys-Gly) (interchain with G-Cter in SUMO2); alternate linkage. Residues 626-679 (NSKQAALDKEEEDGEEGFTSPRKGKRKSKSAGGDGSSRGTPKKTKVEPYSLTTQ) form a disordered region. Position 645 is a phosphoserine; by CDK1 (serine 645). A phosphoserine mark is found at serine 655 and serine 662. Lysine 670 participates in a covalent cross-link: Glycyl lysine isopeptide (Lys-Gly) (interchain with G-Cter in SUMO2). The RING-type zinc finger occupies 717-756 (CICCQELVFRPITTVCQHNVCKDCLDRSFKAQVFSCPACR).

In terms of assembly, interacts with DNMT3A and DNMT3B. Interacts with DNMT1; the interaction is direct. Interacts with USP7; leading to its deubiquitination. Interacts with histone H3. Interacts with HDAC1, but not with HDAC2. Interacts with BLTP3A. Interacts with PML. Interacts with EHMT2. Binds methylated CpG containing oligonucleotides. Interacts with ZNF263; recruited to the SIX3 promoter along with other proteins involved in chromatin modification and transcriptional corepression where it contributes to transcriptional repression. Interacts with UHRF2. Interacts with FANCD2. Interacts with TET1 isoform 2; this interaction induces the recruitment of TET1 isoform 2 to replicating heterochromatin. Post-translationally, phosphorylation at Ser-302 of the linker region decreases the binding to H3K9me3. Phosphorylation at Ser-645 by CDK1 during M phase impairs interaction with USP7, preventing deubiquitination and leading to degradation by the proteasome. In terms of processing, ubiquitinated; which leads to proteasomal degradation. Autoubiquitinated; interaction with USP7 leads to deubiquitination and prevents degradation. Ubiquitination and degradation takes place during M phase, when phosphorylation at Ser-645 prevents interaction with USP7 and subsequent deubiquitination. Polyubiquitination may be stimulated by DNA damage.

It is found in the nucleus. The enzyme catalyses S-ubiquitinyl-[E2 ubiquitin-conjugating enzyme]-L-cysteine + [acceptor protein]-L-lysine = [E2 ubiquitin-conjugating enzyme]-L-cysteine + N(6)-ubiquitinyl-[acceptor protein]-L-lysine.. It participates in protein modification; protein ubiquitination. In terms of biological role, multidomain protein that acts as a key epigenetic regulator by bridging DNA methylation and chromatin modification. Specifically recognizes and binds hemimethylated DNA at replication forks via its YDG domain and recruits DNMT1 methyltransferase to ensure faithful propagation of the DNA methylation patterns through DNA replication. In addition to its role in maintenance of DNA methylation, also plays a key role in chromatin modification: through its tudor-like regions and PHD-type zinc fingers, specifically recognizes and binds histone H3 trimethylated at 'Lys-9' (H3K9me3) and unmethylated at 'Arg-2' (H3R2me0), respectively, and recruits chromatin proteins. Enriched in pericentric heterochromatin where it recruits different chromatin modifiers required for this chromatin replication. Also localizes to euchromatic regions where it negatively regulates transcription possibly by impacting DNA methylation and histone modifications. Has E3 ubiquitin-protein ligase activity by mediating the ubiquitination of target proteins such as histone H3 and PML. It is still unclear how E3 ubiquitin-protein ligase activity is related to its role in chromatin in vivo. Plays a role in DNA repair by cooperating with UHRF2 to ensure recruitment of FANCD2 to interstrand cross-links (ICLs) leading to FANCD2 activation. Plays a pivotal role in the establishment of correct spindle architecture by catalyzing the 'Lys-63'-linked ubiquitination of KIF11, thereby controlling KIF11 localization on the spindle. The sequence is that of E3 ubiquitin-protein ligase UHRF1 (UHRF1) from Bos taurus (Bovine).